The chain runs to 268 residues: Transcription initiation factor TFIID subunit 14b (268 aa).

Residues 1–20 (MTNSSSSKKQAQDQPETSEP) show a composition bias toward polar residues. The segment at 1 to 36 (MTNSSSSKKQAQDQPETSEPTLKSLKTKMTKSDEKQ) is disordered. Residues 38-182 (KLKDIEISVP…ESFLARVQNH (145 aa)) enclose the YEATS domain. Positions 229–263 (DELLQLAAARQQVQAHIAKLRRQISLLEGQNQTVK) form a coiled coil.

Belongs to the YAF9 family. Component of the TFIID complex. TFIID is composed of TATA binding protein (TBP) and a number of TBP-associated factors (TAFs) whose MWs range from 14-217 kDa. Interacts with TAF1, TAF4B and TAF12B. Component of the SWR1 chromatin-remodeling complex. Interacts with FLX, a component of the transcription activator complex FRI-C. Interacts with SWC4, and with EAF1A and EAF1B (via HSA domain). In terms of tissue distribution, expressed in roots, leaves, inflorescence and flowering tissues.

The protein localises to the cytoplasm. The protein resides in the nucleus. Functionally, negative regulator of flowering controlling the H4K5 acetylation levels in the FLC and FT chromatin. Positively regulates FLC expression. Component of the transcription factor IID (TFIID) complex that is essential for mediating regulation of RNA polymerase transcription. Component of the SWR1 complex which mediates the ATP-dependent exchange of histone H2A for the H2A variant HZT1 leading to transcriptional regulation of selected genes by chromatin remodeling. Component of a NuA4 histone acetyltransferase complex which is involved in transcriptional activation of selected genes principally by acetylation of nucleosomal histones H4 and H2A. The polypeptide is Transcription initiation factor TFIID subunit 14b (Arabidopsis thaliana (Mouse-ear cress)).